The chain runs to 125 residues: MPTINQLVRQGREVEKIKSKSPAMENSPQRRGVCTRVYTTTPKKPNSALRKVAKVRLTNGFEIISYIGGEGHNLQEHSVVLVRGGRVKDLPGVRYHIVRGSLDLQGVKDRKQSRSKYGAKRPKAK.

A disordered region spans residues 9–31 (RQGREVEKIKSKSPAMENSPQRR). Position 89 is a 3-methylthioaspartic acid (Asp89). The interval 105 to 125 (QGVKDRKQSRSKYGAKRPKAK) is disordered. A compositionally biased stretch (basic residues) spans 113-125 (SRSKYGAKRPKAK).

Belongs to the universal ribosomal protein uS12 family. In terms of assembly, part of the 30S ribosomal subunit. Contacts proteins S8 and S17. May interact with IF1 in the 30S initiation complex.

With S4 and S5 plays an important role in translational accuracy. In terms of biological role, interacts with and stabilizes bases of the 16S rRNA that are involved in tRNA selection in the A site and with the mRNA backbone. Located at the interface of the 30S and 50S subunits, it traverses the body of the 30S subunit contacting proteins on the other side and probably holding the rRNA structure together. The combined cluster of proteins S8, S12 and S17 appears to hold together the shoulder and platform of the 30S subunit. In Polaromonas naphthalenivorans (strain CJ2), this protein is Small ribosomal subunit protein uS12.